Consider the following 186-residue polypeptide: Ribosome-recycling factor (186 aa).

Belongs to the RRF family.

It localises to the cytoplasm. Functionally, responsible for the release of ribosomes from messenger RNA at the termination of protein biosynthesis. May increase the efficiency of translation by recycling ribosomes from one round of translation to another. The chain is Ribosome-recycling factor from Rickettsia prowazekii (strain Madrid E).